The sequence spans 459 residues: tRNA modification GTPase MnmE (459 aa).

(6S)-5-formyl-5,6,7,8-tetrahydrofolate contacts are provided by arginine 23, glutamate 88, and arginine 127. One can recognise a TrmE-type G domain in the interval 223–381; that stretch reads GLDVVIVGKP…LKEYIKDLFF (159 aa). Residue asparagine 233 participates in K(+) binding. GTP contacts are provided by residues 233–238, 252–258, and 277–280; these read NVGKSS, TEIPGTT, and DTAG. Mg(2+) is bound at residue serine 237. Residues threonine 252, isoleucine 254, and threonine 257 each coordinate K(+). Residue threonine 258 participates in Mg(2+) binding. (6S)-5-formyl-5,6,7,8-tetrahydrofolate is bound at residue lysine 459.

It belongs to the TRAFAC class TrmE-Era-EngA-EngB-Septin-like GTPase superfamily. TrmE GTPase family. In terms of assembly, homodimer. Heterotetramer of two MnmE and two MnmG subunits. Requires K(+) as cofactor.

It is found in the cytoplasm. Its function is as follows. Exhibits a very high intrinsic GTPase hydrolysis rate. Involved in the addition of a carboxymethylaminomethyl (cmnm) group at the wobble position (U34) of certain tRNAs, forming tRNA-cmnm(5)s(2)U34. The polypeptide is tRNA modification GTPase MnmE (Clostridium tetani (strain Massachusetts / E88)).